The primary structure comprises 150 residues: Small ribosomal subunit protein uS11z (150 aa).

Phosphoserine is present on Ser19.

The protein belongs to the universal ribosomal protein uS11 family. Interacts with AAK6.

Its subcellular location is the cytoplasm. This is Small ribosomal subunit protein uS11z (RPS14A) from Arabidopsis thaliana (Mouse-ear cress).